Reading from the N-terminus, the 436-residue chain is MENLNLALVSSPKPLLLGHSSSKNVFSGRKSFTFGTFRVSANSSSSHVTRAASKSHQNLKSVQGKVNAHDFASISSSNGQETTSVGVSPQLSPPPPSTVGSPLFWIGIGVGFSALFSVVASRVKKYAMQQAFKSMMGQMNTQNNPFDSGAFSSGPPFPFPMPSASGPATPAGFAGNQSQATSTRSASQSTVTVDIPATKVEAAAPAPDINVKEEVEVKNEPKKSAFVDVSPEETVQKNAFERFKDVDESSSFKEARAPAEASQNGTPFKQGFGDSPSSPSERKSALSVDALEKMMEDPTVQQMVYPYLPEEMRNPSTFKWMMQNPEYRQQLEAMLNNMGGGTEWDSRMMDTLKNFDLNSPDVKQQFDQIGLSPQEVISKIMANPDVAMAFQNPRVQAAIMDCSQNPMSIVKYQNDKEVMDVFNKISELFPGVSGPP.

The N-terminal 39 residues, M1–V39, are a transit peptide targeting the chloroplast. Residues S40 to A72 constitute a chloroplast; inner membrane transit peptide. Topologically, residues S73–T98 are chloroplast intermembrane. The span at I74–Q90 shows a compositional bias: polar residues. Residues I74 to P95 form a disordered region. The chain crosses the membrane as a helical span at residues V99–V119. Topologically, residues A120 to P436 are stromal. 2 disordered regions span residues P160–V191 and D245–A285. A compositionally biased stretch (low complexity) spans Q177–V191. Residues D245–A257 are compositionally biased toward basic and acidic residues. STI1 domains follow at residues D297–L331 and P373–Y412.

Part of the Tic complex. Interacts with HSP93, TIC110, TIC62 and TOC75.

It localises to the plastid. The protein resides in the chloroplast inner membrane. In terms of biological role, involved in protein precursor import into chloroplasts. Part of the motor complex consisting of a co-chaperone (TIC40) and a chaperone (HSP93) associated with the import channel (TIC110). Causes the release of bound transit peptides from TIC110 and stimulates ATP hydrolysis by HSP93. Involved in reinsertion of proteins from the chloroplast stroma into the inner membrane. This chain is Protein TIC 40, chloroplastic (TIC40), found in Pisum sativum (Garden pea).